A 494-amino-acid polypeptide reads, in one-letter code: Calmodulin-binding protein 60 A (494 aa).

Residues 1–62 (MRIPTYDFGS…AGIKWICEKE (62 aa)) are calmodulin-binding. Residues 132 to 252 (VSDWTDEDIR…AFHRRLNLSN (121 aa)) are DNA-binding.

Belongs to the plant ACBP60 protein family. In terms of assembly, interacts with calmodulin (CaM). In terms of tissue distribution, expressed in stems, flowers and root.

The protein resides in the nucleus. In terms of biological role, transcription activator that binds DNA in a sequence-specific manner, likely 5'-GAAATTTTGG-3', to promote the expression of target genes. The sequence is that of Calmodulin-binding protein 60 A from Arabidopsis thaliana (Mouse-ear cress).